The chain runs to 233 residues: Attacin-B (233 aa).

The N-terminal stretch at 1-17 is a signal peptide; it reads MFAKLFLVSVLLVGVNS. A propeptide spanning residues 18–46 is cleaved from the precursor; the sequence is RYVLVEEPGYYDKQYEEQPQQWVNSRVRR.

This sequence belongs to the attacin/sarcotoxin-2 family.

It localises to the secreted. Hemolymph antibacterial protein. The protein is Attacin-B of Hyalophora cecropia (Cecropia moth).